Reading from the N-terminus, the 206-residue chain is Dephospho-CoA kinase (206 aa).

The DPCK domain occupies Val-4 to Asp-204. Position 12–17 (Ala-12–Thr-17) interacts with ATP.

It belongs to the CoaE family.

It localises to the cytoplasm. It catalyses the reaction 3'-dephospho-CoA + ATP = ADP + CoA + H(+). It participates in cofactor biosynthesis; coenzyme A biosynthesis; CoA from (R)-pantothenate: step 5/5. Catalyzes the phosphorylation of the 3'-hydroxyl group of dephosphocoenzyme A to form coenzyme A. This is Dephospho-CoA kinase from Staphylococcus saprophyticus subsp. saprophyticus (strain ATCC 15305 / DSM 20229 / NCIMB 8711 / NCTC 7292 / S-41).